Reading from the N-terminus, the 58-residue chain is UPF0391 membrane protein Plav_0056 (58 aa).

2 consecutive transmembrane segments (helical) span residues Trp-4 to Val-24 and Ile-30 to Val-50.

It belongs to the UPF0391 family.

The protein localises to the cell membrane. In Parvibaculum lavamentivorans (strain DS-1 / DSM 13023 / NCIMB 13966), this protein is UPF0391 membrane protein Plav_0056.